The chain runs to 29 residues: Trypsin inhibitor 1 (29 aa).

3 disulfides stabilise this stretch: cysteine 3/cysteine 20, cysteine 10/cysteine 22, and cysteine 16/cysteine 28.

It belongs to the protease inhibitor I7 (squash-type serine protease inhibitor) family.

The protein localises to the secreted. Functionally, inhibits trypsin. This is Trypsin inhibitor 1 from Momordica repens.